A 281-amino-acid polypeptide reads, in one-letter code: MEMO1 family protein APE_1771 (281 aa).

The protein belongs to the MEMO1 family.

This is MEMO1 family protein APE_1771 from Aeropyrum pernix (strain ATCC 700893 / DSM 11879 / JCM 9820 / NBRC 100138 / K1).